The primary structure comprises 157 residues: Endoribonuclease YbeY (157 aa).

Residues His111, His115, and His121 each coordinate Zn(2+).

The protein belongs to the endoribonuclease YbeY family. The cofactor is Zn(2+).

The protein localises to the cytoplasm. Single strand-specific metallo-endoribonuclease involved in late-stage 70S ribosome quality control and in maturation of the 3' terminus of the 16S rRNA. This is Endoribonuclease YbeY from Pseudomonas putida (strain ATCC 47054 / DSM 6125 / CFBP 8728 / NCIMB 11950 / KT2440).